A 181-amino-acid polypeptide reads, in one-letter code: Ribulose bisphosphate carboxylase small subunit, chloroplastic 1 (181 aa).

The transit peptide at 1–54 directs the protein to the chloroplast; it reads MASSMLSSAAVVTSPAQATMVAPFTGLKSSSAFPVTRKANNDITSIVSNGGRVS.

Belongs to the RuBisCO small chain family. As to quaternary structure, heterohexadecamer of 8 large and 8 small subunits.

The protein resides in the plastid. Its subcellular location is the chloroplast. In terms of biological role, ruBisCO catalyzes two reactions: the carboxylation of D-ribulose 1,5-bisphosphate, the primary event in carbon dioxide fixation, as well as the oxidative fragmentation of the pentose substrate. Both reactions occur simultaneously and in competition at the same active site. Although the small subunit is not catalytic it is essential for maximal activity. The polypeptide is Ribulose bisphosphate carboxylase small subunit, chloroplastic 1 (Brassica napus (Rape)).